The following is a 492-amino-acid chain: Differentially expressed in FDCP 8 homolog (492 aa).

The segment covering 38-51 has biased composition (gly residues); the sequence is GLGGSGSTGSGSEA. Positions 38 to 62 are disordered; that stretch reads GLGGSGSTGSGSEAGGSEESGPQGA. 2 Phorbol-ester/DAG-type zinc fingers span residues 161-214 and 400-453; these read PHHG…KRVC and DHIR…NMIC. The segment at 468-492 is disordered; that stretch reads RMKSTEDDDDDDDGVATDDDVTAAE. Residues 473–492 are compositionally biased toward acidic residues; it reads EDDDDDDDGVATDDDVTAAE.

This sequence belongs to the DEF8 family.

In Drosophila melanogaster (Fruit fly), this protein is Differentially expressed in FDCP 8 homolog.